The chain runs to 265 residues: Glutamate racemase (265 aa).

Substrate-binding positions include 10-11 (DS) and 42-43 (YG). C73 functions as the Proton donor/acceptor in the catalytic mechanism. 74–75 (NT) serves as a coordination point for substrate. C184 acts as the Proton donor/acceptor in catalysis. 185-186 (TH) lines the substrate pocket.

Belongs to the aspartate/glutamate racemases family.

It catalyses the reaction L-glutamate = D-glutamate. The protein operates within cell wall biogenesis; peptidoglycan biosynthesis. In terms of biological role, provides the (R)-glutamate required for cell wall biosynthesis. This Pediococcus pentosaceus (strain ATCC 25745 / CCUG 21536 / LMG 10740 / 183-1w) protein is Glutamate racemase.